The primary structure comprises 177 residues: Probasin (177 aa).

The N-terminal stretch at 1–17 is a signal peptide; the sequence is MRVILLLLTLDVLGVSS. The cysteines at positions 79 and 170 are disulfide-linked.

The protein belongs to the calycin superfamily. Lipocalin family. As to expression, prostatic epithelial cells.

The protein localises to the nucleus. It localises to the secreted. This Rattus norvegicus (Rat) protein is Probasin (Pbsn).